The primary structure comprises 329 residues: Putative helicase 109L (329 aa).

Residues 105-259 (LTLLTQHKSC…LFDMFFGPEM (155 aa)) form the Helicase ATP-binding domain. An ATP-binding site is contributed by 118 to 125 (CYTGFGKT). The short motif at 212–215 (DEAH) is the DEAH box element.

This sequence belongs to the DEAD box helicase family. DEAH subfamily.

In Invertebrate iridescent virus 3 (IIV-3), this protein is Putative helicase 109L.